Reading from the N-terminus, the 442-residue chain is UDP-N-acetylmuramate--L-alanine ligase (442 aa).

109–115 (GAHGKTS) contributes to the ATP binding site.

The protein belongs to the MurCDEF family.

Its subcellular location is the cytoplasm. The enzyme catalyses UDP-N-acetyl-alpha-D-muramate + L-alanine + ATP = UDP-N-acetyl-alpha-D-muramoyl-L-alanine + ADP + phosphate + H(+). Its pathway is cell wall biogenesis; peptidoglycan biosynthesis. Functionally, cell wall formation. This chain is UDP-N-acetylmuramate--L-alanine ligase, found in Streptococcus pyogenes serotype M2 (strain MGAS10270).